Consider the following 96-residue polypeptide: Co-chaperonin GroES (96 aa).

It belongs to the GroES chaperonin family. In terms of assembly, heptamer of 7 subunits arranged in a ring. Interacts with the chaperonin GroEL.

The protein resides in the cytoplasm. Functionally, together with the chaperonin GroEL, plays an essential role in assisting protein folding. The GroEL-GroES system forms a nano-cage that allows encapsulation of the non-native substrate proteins and provides a physical environment optimized to promote and accelerate protein folding. GroES binds to the apical surface of the GroEL ring, thereby capping the opening of the GroEL channel. The protein is Co-chaperonin GroES of Caulobacter sp. (strain K31).